A 233-amino-acid polypeptide reads, in one-letter code: Protein FAM204A (233 aa).

Disordered regions lie at residues 1-57 (MWSG…PSTE) and 79-127 (KFQE…ETQW). Positions 13-24 (SDVELNSDDDTT) are enriched in acidic residues. Residues 34–46 (EGKEDGTFEKTEM) are compositionally biased toward basic and acidic residues. The span at 98–109 (EKKKRKRSRKGK) shows a compositional bias: basic residues. Positions 144 to 164 (VKRKKVEKSGLEKRIDQAVEE) form a coiled coil.

The polypeptide is Protein FAM204A (FAM204A) (Bos taurus (Bovine)).